Consider the following 37-residue polypeptide: Large ribosomal subunit protein bL36 (37 aa).

It belongs to the bacterial ribosomal protein bL36 family.

The polypeptide is Large ribosomal subunit protein bL36 (Hydrogenobaculum sp. (strain Y04AAS1)).